A 148-amino-acid chain; its full sequence is Ubiquitin-conjugating enzyme E2 8 (148 aa).

The UBC core domain occupies 1–147 (MASKRILKEL…ARNWTQKYAM (147 aa)). Residue C85 is the Glycyl thioester intermediate of the active site.

Belongs to the ubiquitin-conjugating enzyme family. As to quaternary structure, interacts with CIP8, CHIP, NLA and XERICO. Highest expression in young stems, old leaves. Lowest levels in floral buds, anthers and young leaves.

It catalyses the reaction S-ubiquitinyl-[E1 ubiquitin-activating enzyme]-L-cysteine + [E2 ubiquitin-conjugating enzyme]-L-cysteine = [E1 ubiquitin-activating enzyme]-L-cysteine + S-ubiquitinyl-[E2 ubiquitin-conjugating enzyme]-L-cysteine.. The protein operates within protein modification; protein ubiquitination. In terms of biological role, accepts the ubiquitin from the E1 complex and catalyzes its covalent attachment to other proteins. Mediates the selective degradation of short-lived and abnormal proteins. The polypeptide is Ubiquitin-conjugating enzyme E2 8 (UBC8) (Arabidopsis thaliana (Mouse-ear cress)).